Consider the following 337-residue polypeptide: tRNA N6-adenosine threonylcarbamoyltransferase (337 aa).

The Fe cation site is built by His-111 and His-115. Substrate-binding positions include 134–138, Asp-167, Gly-180, and Asn-272; that span reads LVSGG. Asp-300 is a Fe cation binding site.

The protein belongs to the KAE1 / TsaD family. The cofactor is Fe(2+).

The protein resides in the cytoplasm. The enzyme catalyses L-threonylcarbamoyladenylate + adenosine(37) in tRNA = N(6)-L-threonylcarbamoyladenosine(37) in tRNA + AMP + H(+). Functionally, required for the formation of a threonylcarbamoyl group on adenosine at position 37 (t(6)A37) in tRNAs that read codons beginning with adenine. Is involved in the transfer of the threonylcarbamoyl moiety of threonylcarbamoyl-AMP (TC-AMP) to the N6 group of A37, together with TsaE and TsaB. TsaD likely plays a direct catalytic role in this reaction. The chain is tRNA N6-adenosine threonylcarbamoyltransferase from Shewanella amazonensis (strain ATCC BAA-1098 / SB2B).